The primary structure comprises 178 residues: uncharacterized protein (178 aa).

Polar residues predominate over residues 1–13 (MEVASSSSACQFD). Disordered stretches follow at residues 1 to 24 (MEVA…ELKP) and 47 to 114 (WPSR…KKEK).

This is an uncharacterized protein from Caenorhabditis elegans.